The primary structure comprises 339 residues: S-adenosylmethionine:tRNA ribosyltransferase-isomerase (339 aa).

The protein belongs to the QueA family. As to quaternary structure, monomer.

It localises to the cytoplasm. The catalysed reaction is 7-aminomethyl-7-carbaguanosine(34) in tRNA + S-adenosyl-L-methionine = epoxyqueuosine(34) in tRNA + adenine + L-methionine + 2 H(+). Its pathway is tRNA modification; tRNA-queuosine biosynthesis. Functionally, transfers and isomerizes the ribose moiety from AdoMet to the 7-aminomethyl group of 7-deazaguanine (preQ1-tRNA) to give epoxyqueuosine (oQ-tRNA). In Campylobacter fetus subsp. fetus (strain 82-40), this protein is S-adenosylmethionine:tRNA ribosyltransferase-isomerase.